A 240-amino-acid polypeptide reads, in one-letter code: 2-C-methyl-D-erythritol 4-phosphate cytidylyltransferase (240 aa).

Belongs to the IspD/TarI cytidylyltransferase family. IspD subfamily.

It carries out the reaction 2-C-methyl-D-erythritol 4-phosphate + CTP + H(+) = 4-CDP-2-C-methyl-D-erythritol + diphosphate. It functions in the pathway isoprenoid biosynthesis; isopentenyl diphosphate biosynthesis via DXP pathway; isopentenyl diphosphate from 1-deoxy-D-xylulose 5-phosphate: step 2/6. In terms of biological role, catalyzes the formation of 4-diphosphocytidyl-2-C-methyl-D-erythritol from CTP and 2-C-methyl-D-erythritol 4-phosphate (MEP). The protein is 2-C-methyl-D-erythritol 4-phosphate cytidylyltransferase of Chlorobium luteolum (strain DSM 273 / BCRC 81028 / 2530) (Pelodictyon luteolum).